Consider the following 103-residue polypeptide: Acylphosphatase-2 (103 aa).

N-acetylserine is present on Ser-2. One can recognise an Acylphosphatase-like domain in the interval 13-103 (SVDYEVFGRV…LDFSGFSTRY (91 aa)). Residues Arg-28 and Asn-46 contribute to the active site.

The protein belongs to the acylphosphatase family.

The enzyme catalyses an acyl phosphate + H2O = a carboxylate + phosphate + H(+). Its function is as follows. Its physiological role is not yet clear. The sequence is that of Acylphosphatase-2 (ACYP2) from Gallus gallus (Chicken).